A 662-amino-acid polypeptide reads, in one-letter code: Neurexin-2-beta (662 aa).

Residues 1–10 (MPPGGSGQGG) show a composition bias toward gly residues. The segment at 1–27 (MPPGGSGQGGCPRRPPALAGPLPPPPP) is disordered. Residues 1 to 46 (MPPGGSGQGGCPRRPPALAGPLPPPPPPPPLPLLLGLLLLLGAAEG) form the signal peptide. Topologically, residues 47–586 (ARVSSSLSTT…EVIRESSSTT (540 aa)) are extracellular. The region spanning 87 to 295 (TTYIFGKGGA…HLRLVGEGPS (209 aa)) is the Laminin G-like domain. The Ca(2+) site is built by Asp-139 and Val-156. Asn-186 is a glycosylation site (N-linked (GlcNAc...) asparagine). Ca(2+)-binding residues include Ile-238 and Asn-240. The O-linked (Xyl...) (heparan sulfate) serine glycan is linked to Ser-350. 3 disordered regions span residues 408–458 (ATQD…LPPT), 476–496 (LLSP…ATGA), and 530–557 (LGPG…PGFP). Residues 587-607 (GMVVGIVAAAALCILILLYAM) traverse the membrane as a helical segment. At 608-662 (YKYRNRDEGSYQVDQSRNYISNSAQSNGAVVKEKAPAAPKTPSKAKKNKDKEYYV) the chain is on the cytoplasmic side. A disordered region spans residues 629 to 662 (NSAQSNGAVVKEKAPAAPKTPSKAKKNKDKEYYV).

Belongs to the neurexin family. As to quaternary structure, interacts (via cytoplasmic C-terminal region) with CASK. Isoform Beta 4b binds alpha-dystroglycan and neuroligins NLGN1, NLGN2 and NLGN3. Interacts with CBLN1, CBLN2 and, less avidly, with CBLN4. Interacts with CLSTN3. Post-translationally, O-glycosylated; contains heparan sulfate. Heparan sulfate attachment is required for synapse development by mediating interactions with neuroligins. Brain (neuronal synapse).

It localises to the presynaptic cell membrane. Its function is as follows. Neuronal cell surface protein that may be involved in cell recognition and cell adhesion. The sequence is that of Neurexin-2-beta (Nrxn2) from Rattus norvegicus (Rat).